Consider the following 253-residue polypeptide: MGSDAWVGLWRPHRPRGPIAAHYGGPGPKYKLPPNTGYALHDPSRPRAPAFTFGARFPTQQTTCGPGPGHLVPARMTVRGTDGAPAYSIYGRPRRSAPFLTPGPGRYFPERAGNATYPSAPRHTIAPRNWGVQAEQQSPGPAAYTVPSLLGPRVIGKVSAPTCSIYGRRAAGSFFEDLSKTPGPCAYQVVSPGVYKSRAPQFTILARTSLPQDNTRKPGPAAYNVDQHRKPRGWSFGIRHSDYLAPLVTDADN.

An STPGR repeat occupies 182-207 (PGPCAYQVVSPGVYKSRAPQFTILAR).

Belongs to the CIMAP family.

It is found in the cell projection. Its subcellular location is the cilium. The protein localises to the flagellum. The protein is Ciliary microtubule associated protein 1B of Homo sapiens (Human).